The primary structure comprises 463 residues: Major capsid protein (463 aa).

This sequence belongs to the NCLDV major capsid protein family. In terms of assembly, homomultimer.

The protein resides in the virion. Its function is as follows. Major capsid protein that self assembles to form a T=133 or T=147 icosahedral capsid. The sequence is that of Major capsid protein from Dryophytes versicolor (chameleon treefrog).